We begin with the raw amino-acid sequence, 272 residues long: Flt3 receptor-interacting lectin (272 aa).

Positions 1 to 8 are cleaved as a signal peptide; sequence MFPSKVKS. Alpha-D-mannopyranose contacts are provided by Asp-94 and Gly-112. Asn-125 and Asn-131 each carry an N-linked (GlcNAc...) asparagine glycan. Alpha-D-mannopyranose-binding positions include Asn-152 and 237-238; that span reads QD.

It belongs to the leguminous lectin family. Dimer (alpha/beta)2. Tetramer (alpha/beta)4. Glycosylated at Asn-125 by either a paucimannose type N-glycan (alpha-4) or a single N-acetylglucosamine (alpha-3). Glycosylated at Asn-131 by a paucimannose type N-glycan (alpha-2, alpha-3 and alpha-4). In alpha-2, Asn-125 is deamidated to an Asp, possibly due to the action of intrinsic peptide N-glycosidase (PGNase).

It is found in the protein storage vacuole lumen. Mannose-binding lectin. Accommodates most effectively a non-reducing terminal alpha-d-mannosyl unit. Strongly precipitates murine IgM but not IgG. This chain is Flt3 receptor-interacting lectin, found in Lablab purpureus (Hyacinth bean).